The following is a 126-amino-acid chain: Ribosome-binding factor A (126 aa).

This sequence belongs to the RbfA family. As to quaternary structure, monomer. Binds 30S ribosomal subunits, but not 50S ribosomal subunits or 70S ribosomes.

Its subcellular location is the cytoplasm. One of several proteins that assist in the late maturation steps of the functional core of the 30S ribosomal subunit. Associates with free 30S ribosomal subunits (but not with 30S subunits that are part of 70S ribosomes or polysomes). Required for efficient processing of 16S rRNA. May interact with the 5'-terminal helix region of 16S rRNA. The chain is Ribosome-binding factor A from Nitrosospira multiformis (strain ATCC 25196 / NCIMB 11849 / C 71).